A 339-amino-acid polypeptide reads, in one-letter code: Large ribosomal subunit protein uL10 (339 aa).

Positions 305-339 (TQPQQEEKVEEAEEEEEEEEASEEDALAGLGALFG) are disordered. Residues 312–330 (KVEEAEEEEEEEEASEEDA) are compositionally biased toward acidic residues.

It belongs to the universal ribosomal protein uL10 family. Part of the 50S ribosomal subunit. Forms part of the ribosomal stalk which helps the ribosome interact with GTP-bound translation factors. Forms a heptameric L10(L12)2(L12)2(L12)2 complex, where L10 forms an elongated spine to which the L12 dimers bind in a sequential fashion.

Forms part of the ribosomal stalk, playing a central role in the interaction of the ribosome with GTP-bound translation factors. This Thermococcus onnurineus (strain NA1) protein is Large ribosomal subunit protein uL10.